Reading from the N-terminus, the 371-residue chain is Maltose/maltodextrin import ATP-binding protein MalK (371 aa).

Residues 4–234 (VQLQNVTKAW…PADRFVAGFI (231 aa)) enclose the ABC transporter domain. 36–43 (GPSGCGKS) contacts ATP.

It belongs to the ABC transporter superfamily. Maltooligosaccharide importer (TC 3.A.1.1.1) family. In terms of assembly, the complex is composed of two ATP-binding proteins (MalK), two transmembrane proteins (MalG and MalK) and a solute-binding protein (MalE).

The protein localises to the cell inner membrane. It catalyses the reaction D-maltose(out) + ATP + H2O = D-maltose(in) + ADP + phosphate + H(+). In terms of biological role, part of the ABC transporter complex MalEFGK involved in maltose/maltodextrin import. Responsible for energy coupling to the transport system. The polypeptide is Maltose/maltodextrin import ATP-binding protein MalK (Escherichia coli O157:H7).